A 291-amino-acid chain; its full sequence is Cell division protein ZipA (291 aa).

The Periplasmic portion of the chain corresponds to 1-5; sequence MQELR. The chain crosses the membrane as a helical span at residues 6–26; sequence FVLIIVGALAIAALLFHGLWT. At 27–291 the chain is on the cytoplasmic side; the sequence is SKKEGKSKFG…QEFKVRAAQA (265 aa). The segment covering 29 to 51 has biased composition (basic and acidic residues); that stretch reads KEGKSKFGDKPLRKMKVESDDPP. Disordered regions lie at residues 29–61 and 92–119; these read KEGKSKFGDKPLRKMKVESDDPPSRAFAAEDDF and ELDEEEDEEARIPVQPQSQPQPRKVQPQ.

The protein belongs to the ZipA family. Interacts with FtsZ via their C-terminal domains.

The protein resides in the cell inner membrane. Essential cell division protein that stabilizes the FtsZ protofilaments by cross-linking them and that serves as a cytoplasmic membrane anchor for the Z ring. Also required for the recruitment to the septal ring of downstream cell division proteins. The sequence is that of Cell division protein ZipA from Vibrio cholerae serotype O1 (strain ATCC 39541 / Classical Ogawa 395 / O395).